Reading from the N-terminus, the 303-residue chain is Pantothenate synthetase (303 aa).

30–37 (MGYLHAGH) provides a ligand contact to ATP. His37 acts as the Proton donor in catalysis. A (R)-pantoate-binding site is contributed by Gln61. Gln61 serves as a coordination point for beta-alanine. 147–150 (GAKD) is an ATP binding site. Gln153 provides a ligand contact to (R)-pantoate. Residues Val176 and 184 to 187 (LSSR) contribute to the ATP site.

The protein belongs to the pantothenate synthetase family. Homodimer.

The protein resides in the cytoplasm. It catalyses the reaction (R)-pantoate + beta-alanine + ATP = (R)-pantothenate + AMP + diphosphate + H(+). It participates in cofactor biosynthesis; (R)-pantothenate biosynthesis; (R)-pantothenate from (R)-pantoate and beta-alanine: step 1/1. Functionally, catalyzes the condensation of pantoate with beta-alanine in an ATP-dependent reaction via a pantoyl-adenylate intermediate. In Rhizobium johnstonii (strain DSM 114642 / LMG 32736 / 3841) (Rhizobium leguminosarum bv. viciae), this protein is Pantothenate synthetase.